A 347-amino-acid polypeptide reads, in one-letter code: GMP reductase (347 aa).

Residue 108–131 (ADFIKLSEILAMSEELNFICIDIA) participates in NADP(+) binding. K(+) is bound by residues Gly-181 and Gly-183. The active-site Thioimidate intermediate is Cys-186. 216-239 (IIGDGGCSCAGDVAKAFGGGADFV) lines the NADP(+) pocket.

Belongs to the IMPDH/GMPR family. GuaC type 1 subfamily. In terms of assembly, homotetramer.

It carries out the reaction IMP + NH4(+) + NADP(+) = GMP + NADPH + 2 H(+). Functionally, catalyzes the irreversible NADPH-dependent deamination of GMP to IMP. It functions in the conversion of nucleobase, nucleoside and nucleotide derivatives of G to A nucleotides, and in maintaining the intracellular balance of A and G nucleotides. In Shewanella halifaxensis (strain HAW-EB4), this protein is GMP reductase.